Consider the following 83-residue polypeptide: MSSGGLLLLLGLLTLWEVLTPVSSKDRPKFCELPADIGPCDDFTGAFHYSPREHECIEFIYGGCKGNANNFNTQEECESTCAA.

The N-terminal stretch at 1 to 24 is a signal peptide; sequence MSSGGLLLLLGLLTLWEVLTPVSS. The BPTI/Kunitz inhibitor domain occupies 31 to 81; it reads CELPADIGPCDDFTGAFHYSPREHECIEFIYGGCKGNANNFNTQEECESTC. Cystine bridges form between C31/C81, C40/C64, and C56/C77.

It belongs to the venom Kunitz-type family. In terms of tissue distribution, expressed by the venom gland.

It localises to the secreted. In terms of biological role, serine protease inhibitor. Does not inhibit plasmin, and does not reduce blood loss in the mouse tail vein blood loss model. The sequence is that of Kunitz-type serine protease inhibitor textilinin-6 from Pseudonaja textilis textilis (Eastern brown snake).